The following is a 205-amino-acid chain: Probable GTP-binding protein EngB (205 aa).

One can recognise an EngB-type G domain in the interval 29 to 203 (QGAEIAFIGR…KAVLSQWFRS (175 aa)). GTP-binding positions include 37–44 (GRSNAGKS), 64–68 (GRTQM), 82–85 (DLPG), 149–152 (TKSD), and 182–184 (FSS). Mg(2+)-binding residues include Ser44 and Thr66.

The protein belongs to the TRAFAC class TrmE-Era-EngA-EngB-Septin-like GTPase superfamily. EngB GTPase family. The cofactor is Mg(2+).

In terms of biological role, necessary for normal cell division and for the maintenance of normal septation. The sequence is that of Probable GTP-binding protein EngB from Coxiella burnetii (strain RSA 493 / Nine Mile phase I).